The following is a 333-amino-acid chain: DNA-directed RNA polymerase subunit alpha (333 aa).

The segment at 1–233 (MVREKVRVST…DLFIPFLHAE (233 aa)) is alpha N-terminal domain (alpha-NTD). The interval 266-333 (KKEIAFKSIF…DILEIEKHFP (68 aa)) is alpha C-terminal domain (alpha-CTD).

It belongs to the RNA polymerase alpha chain family. In plastids the minimal PEP RNA polymerase catalytic core is composed of four subunits: alpha, beta, beta', and beta''. When a (nuclear-encoded) sigma factor is associated with the core the holoenzyme is formed, which can initiate transcription.

It is found in the plastid. The protein resides in the chloroplast. The enzyme catalyses RNA(n) + a ribonucleoside 5'-triphosphate = RNA(n+1) + diphosphate. Its function is as follows. DNA-dependent RNA polymerase catalyzes the transcription of DNA into RNA using the four ribonucleoside triphosphates as substrates. The sequence is that of DNA-directed RNA polymerase subunit alpha from Lotus japonicus (Lotus corniculatus var. japonicus).